The chain runs to 441 residues: Bacteria-responsive protein 1 (441 aa).

The N-terminal stretch at 1–18 (MWFFKVGALLFLAALVSA) is a signal peptide. The N-linked (GlcNAc...) asparagine glycan is linked to Asn20. Residues 25-441 (PKVLCYYDGQ…PILRAAKYRL (417 aa)) enclose the GH18 domain. Cys29 and Cys56 are disulfide-bonded. N-linked (GlcNAc...) asparagine glycosylation is present at Asn225.

This sequence belongs to the glycosyl hydrolase 18 family. IDGF subfamily. Salivary gland (at protein level).

It is found in the secreted. Promotes recruitment of host neutrophils at the bite site. Induces expression of IL1B and IL6 in the skin of the host. In terms of biological role, (Microbial infection) Enhances Zika virus replication and exacerbates disease pathogenesis in the host. This is Bacteria-responsive protein 1 from Aedes aegypti (Yellowfever mosquito).